We begin with the raw amino-acid sequence, 478 residues long: Sulfate adenylyltransferase subunit 1 (478 aa).

The 217-residue stretch at 28–244 (KTMLRFLTCG…LESVDVVNAS (217 aa)) folds into the tr-type G domain. Positions 37-44 (GSVDDGKS) are G1. Position 37–44 (37–44 (GSVDDGKS)) interacts with GTP. The tract at residues 95–99 (GITID) is G2. The G3 stretch occupies residues 116-119 (DTPG). GTP contacts are provided by residues 116–120 (DTPGH) and 171–174 (NKMD). The G4 stretch occupies residues 171-174 (NKMD). The segment at 209–211 (SAL) is G5.

Belongs to the TRAFAC class translation factor GTPase superfamily. Classic translation factor GTPase family. CysN/NodQ subfamily. As to quaternary structure, heterodimer composed of CysD, the smaller subunit, and CysN.

The catalysed reaction is sulfate + ATP + H(+) = adenosine 5'-phosphosulfate + diphosphate. Its pathway is sulfur metabolism; hydrogen sulfide biosynthesis; sulfite from sulfate: step 1/3. In terms of biological role, with CysD forms the ATP sulfurylase (ATPS) that catalyzes the adenylation of sulfate producing adenosine 5'-phosphosulfate (APS) and diphosphate, the first enzymatic step in sulfur assimilation pathway. APS synthesis involves the formation of a high-energy phosphoric-sulfuric acid anhydride bond driven by GTP hydrolysis by CysN coupled to ATP hydrolysis by CysD. The protein is Sulfate adenylyltransferase subunit 1 of Yersinia enterocolitica serotype O:8 / biotype 1B (strain NCTC 13174 / 8081).